Here is a 732-residue protein sequence, read N- to C-terminus: Elongation factor 2 (732 aa).

The 242-residue stretch at 19–260 (ERIRNIDIAA…MVIKNLPNPR (242 aa)) folds into the tr-type G domain. GTP is bound by residues 28–35 (AHIDHGKT), 94–98 (DTPGH), and 148–151 (NKVD). Histidine 598 is subject to Diphthamide.

Belongs to the TRAFAC class translation factor GTPase superfamily. Classic translation factor GTPase family. EF-G/EF-2 subfamily.

It is found in the cytoplasm. Functionally, catalyzes the GTP-dependent ribosomal translocation step during translation elongation. During this step, the ribosome changes from the pre-translocational (PRE) to the post-translocational (POST) state as the newly formed A-site-bound peptidyl-tRNA and P-site-bound deacylated tRNA move to the P and E sites, respectively. Catalyzes the coordinated movement of the two tRNA molecules, the mRNA and conformational changes in the ribosome. The sequence is that of Elongation factor 2 from Picrophilus torridus (strain ATCC 700027 / DSM 9790 / JCM 10055 / NBRC 100828 / KAW 2/3).